We begin with the raw amino-acid sequence, 250 residues long: Ubiquinone biosynthesis O-methyltransferase (250 aa).

S-adenosyl-L-methionine-binding residues include Arg-41, Gly-72, Asp-93, and Met-136.

This sequence belongs to the methyltransferase superfamily. UbiG/COQ3 family.

It catalyses the reaction a 3-demethylubiquinol + S-adenosyl-L-methionine = a ubiquinol + S-adenosyl-L-homocysteine + H(+). The catalysed reaction is a 3-(all-trans-polyprenyl)benzene-1,2-diol + S-adenosyl-L-methionine = a 2-methoxy-6-(all-trans-polyprenyl)phenol + S-adenosyl-L-homocysteine + H(+). The protein operates within cofactor biosynthesis; ubiquinone biosynthesis. Its function is as follows. O-methyltransferase that catalyzes the 2 O-methylation steps in the ubiquinone biosynthetic pathway. This chain is Ubiquinone biosynthesis O-methyltransferase, found in Agrobacterium fabrum (strain C58 / ATCC 33970) (Agrobacterium tumefaciens (strain C58)).